A 383-amino-acid polypeptide reads, in one-letter code: tRNA(Met) cytidine acetate ligase (383 aa).

ATP is bound by residues 7 to 20 (ISEYNPFHNGHLYQ), G102, N160, and 181 to 182 (RI).

This sequence belongs to the TmcAL family.

The protein resides in the cytoplasm. It catalyses the reaction cytidine(34) in elongator tRNA(Met) + acetate + ATP = N(4)-acetylcytidine(34) in elongator tRNA(Met) + AMP + diphosphate. Catalyzes the formation of N(4)-acetylcytidine (ac(4)C) at the wobble position of elongator tRNA(Met), using acetate and ATP as substrates. First activates an acetate ion to form acetyladenylate (Ac-AMP) and then transfers the acetyl group to tRNA to form ac(4)C34. This is tRNA(Met) cytidine acetate ligase from Exiguobacterium sibiricum (strain DSM 17290 / CCUG 55495 / CIP 109462 / JCM 13490 / 255-15).